Reading from the N-terminus, the 160-residue chain is SsrA-binding protein (160 aa).

The interval 134–160 (RKAHDKREAVKERDWNRDKARLMRDRG) is disordered. Residues 138–160 (DKREAVKERDWNRDKARLMRDRG) are compositionally biased toward basic and acidic residues.

Belongs to the SmpB family.

It is found in the cytoplasm. Functionally, required for rescue of stalled ribosomes mediated by trans-translation. Binds to transfer-messenger RNA (tmRNA), required for stable association of tmRNA with ribosomes. tmRNA and SmpB together mimic tRNA shape, replacing the anticodon stem-loop with SmpB. tmRNA is encoded by the ssrA gene; the 2 termini fold to resemble tRNA(Ala) and it encodes a 'tag peptide', a short internal open reading frame. During trans-translation Ala-aminoacylated tmRNA acts like a tRNA, entering the A-site of stalled ribosomes, displacing the stalled mRNA. The ribosome then switches to translate the ORF on the tmRNA; the nascent peptide is terminated with the 'tag peptide' encoded by the tmRNA and targeted for degradation. The ribosome is freed to recommence translation, which seems to be the essential function of trans-translation. This Azorhizobium caulinodans (strain ATCC 43989 / DSM 5975 / JCM 20966 / LMG 6465 / NBRC 14845 / NCIMB 13405 / ORS 571) protein is SsrA-binding protein.